A 715-amino-acid chain; its full sequence is Formate dehydrogenase H (715 aa).

The region spanning 1–56 (MKKVVTVCPYCASGCKINLVVDNGKIVRAEAAQGKTNQGTLCLKGYYGWDFINDTQ) is the 4Fe-4S Mo/W bis-MGD-type domain. [4Fe-4S] cluster-binding residues include Cys8, Cys11, Cys15, and Cys42. The Electron donor/acceptor role is filled by Lys44. The Mo-bis(molybdopterin guanine dinucleotide) site is built by Arg110, Sec140, Asn176, Asp179, Ser180, Cys201, Asp202, Arg204, Gly221, Asn223, Met297, Gln335, Asp404, Thr408, Gln428, Asp429, Ser445, Asp478, Arg581, Glu582, His585, Ser587, Tyr678, and Lys679. The active-site Proton donor/acceptor is the Sec140. A non-standard amino acid (selenocysteine) is located at residue Sec140.

The protein belongs to the prokaryotic molybdopterin-containing oxidoreductase family. As to quaternary structure, consists of two separable enzymatic activities: a formate dehydrogenase component (FDH-H) and hydrogenase-3. [4Fe-4S] cluster is required as a cofactor. The cofactor is Mo-bis(molybdopterin guanine dinucleotide).

The enzyme catalyses formate + A + H(+) = AH2 + CO2. Its activity is regulated as follows. Inhibited by aerobic conditions. In terms of biological role, decomposes formic acid to hydrogen and carbon dioxide under anaerobic conditions in the absence of exogenous electron acceptors. The protein is Formate dehydrogenase H (fdhF) of Escherichia coli (strain K12).